Here is a 567-residue protein sequence, read N- to C-terminus: Membrane protein insertase YidC (567 aa).

Residues 3 to 23 (IQRIVLFAGLAIVSYLMVLAW) traverse the membrane as a helical segment. Positions 32 to 80 (TEQVAEAQSSSDSSATNSTDDMILPEDNNAGGEEFATPETGSLASTSAN) are disordered. Positions 40 to 52 (SSSDSSATNSTDD) are enriched in low complexity. Polar residues predominate over residues 70 to 80 (ETGSLASTSAN). A run of 5 helical transmembrane segments spans residues 354–374 (FGWL…FYGL), 378–398 (WGVA…HLSA), 445–465 (GGCL…WVLF), 485–505 (MDPY…QMSL), and 522–542 (PLIF…YWLV).

Belongs to the OXA1/ALB3/YidC family. Type 1 subfamily. In terms of assembly, interacts with the Sec translocase complex via SecD. Specifically interacts with transmembrane segments of nascent integral membrane proteins during membrane integration.

It localises to the cell inner membrane. In terms of biological role, required for the insertion and/or proper folding and/or complex formation of integral membrane proteins into the membrane. Involved in integration of membrane proteins that insert both dependently and independently of the Sec translocase complex, as well as at least some lipoproteins. Aids folding of multispanning membrane proteins. The chain is Membrane protein insertase YidC from Marinobacter nauticus (strain ATCC 700491 / DSM 11845 / VT8) (Marinobacter aquaeolei).